The chain runs to 460 residues: Cysteine--tRNA ligase (460 aa).

C28 lines the Zn(2+) pocket. Positions 30 to 40 (VTIYDLCHIGH) match the 'HIGH' region motif. Zn(2+) is bound by residues C209, H234, and E238. The 'KMSKS' region motif lies at 266–270 (KMSKS). K269 serves as a coordination point for ATP.

Belongs to the class-I aminoacyl-tRNA synthetase family. In terms of assembly, monomer. Zn(2+) is required as a cofactor.

The protein localises to the cytoplasm. The enzyme catalyses tRNA(Cys) + L-cysteine + ATP = L-cysteinyl-tRNA(Cys) + AMP + diphosphate. This Vibrio vulnificus (strain CMCP6) protein is Cysteine--tRNA ligase.